Consider the following 1155-residue polypeptide: DNA-directed RNA polymerase subunit beta (1155 aa).

It belongs to the RNA polymerase beta chain family. As to quaternary structure, the RNAP catalytic core consists of 2 alpha, 1 beta, 1 beta' and 1 omega subunit. When a sigma factor is associated with the core the holoenzyme is formed, which can initiate transcription.

The catalysed reaction is RNA(n) + a ribonucleoside 5'-triphosphate = RNA(n+1) + diphosphate. Its function is as follows. DNA-dependent RNA polymerase catalyzes the transcription of DNA into RNA using the four ribonucleoside triphosphates as substrates. The protein is DNA-directed RNA polymerase subunit beta of Borrelia recurrentis (strain A1).